We begin with the raw amino-acid sequence, 258 residues long: Thiazole synthase (258 aa).

Residue K100 is the Schiff-base intermediate with DXP of the active site. Residues G161, 187–188 (AG), and 209–210 (NT) each bind 1-deoxy-D-xylulose 5-phosphate.

Belongs to the ThiG family. As to quaternary structure, homotetramer. Forms heterodimers with either ThiH or ThiS.

The protein resides in the cytoplasm. The enzyme catalyses [ThiS sulfur-carrier protein]-C-terminal-Gly-aminoethanethioate + 2-iminoacetate + 1-deoxy-D-xylulose 5-phosphate = [ThiS sulfur-carrier protein]-C-terminal Gly-Gly + 2-[(2R,5Z)-2-carboxy-4-methylthiazol-5(2H)-ylidene]ethyl phosphate + 2 H2O + H(+). The protein operates within cofactor biosynthesis; thiamine diphosphate biosynthesis. Catalyzes the rearrangement of 1-deoxy-D-xylulose 5-phosphate (DXP) to produce the thiazole phosphate moiety of thiamine. Sulfur is provided by the thiocarboxylate moiety of the carrier protein ThiS. In vitro, sulfur can be provided by H(2)S. This chain is Thiazole synthase, found in Campylobacter jejuni (strain RM1221).